Consider the following 153-residue polypeptide: NADPH-dependent 7-cyano-7-deazaguanine reductase (153 aa).

Residues 1–17 show a composition bias toward polar residues; the sequence is MTDTRNLTQLGSKTQAP. The segment at 1–23 is disordered; that stretch reads MTDTRNLTQLGSKTQAPASPEAA. Cys51 functions as the Thioimide intermediate in the catalytic mechanism. The Proton donor role is filled by Asp58. Residues 73 to 75 and 92 to 93 each bind substrate; these read VES and HE.

The protein belongs to the GTP cyclohydrolase I family. QueF type 1 subfamily.

It localises to the cytoplasm. It catalyses the reaction 7-aminomethyl-7-carbaguanine + 2 NADP(+) = 7-cyano-7-deazaguanine + 2 NADPH + 3 H(+). It functions in the pathway tRNA modification; tRNA-queuosine biosynthesis. Its function is as follows. Catalyzes the NADPH-dependent reduction of 7-cyano-7-deazaguanine (preQ0) to 7-aminomethyl-7-deazaguanine (preQ1). In Chelativorans sp. (strain BNC1), this protein is NADPH-dependent 7-cyano-7-deazaguanine reductase.